The sequence spans 434 residues: Mitochondrial distribution and morphology protein 12 (434 aa).

Residues 1 to 434 (MSIDIDWERA…VYPSFWTFLV (434 aa)) form the SMP-LTD domain. Positions 70–83 (YEEDDNENFSESSE) are enriched in acidic residues. Disordered stretches follow at residues 70 to 141 (YEED…LRSP) and 181 to 277 (TPLG…LPPR). The segment covering 86–97 (SPTREPVDRYGS) has biased composition (basic and acidic residues). A compositionally biased stretch (polar residues) spans 215 to 237 (SAQSRPSTANTGNTLLSRGSMSS).

It belongs to the MDM12 family. In terms of assembly, component of the ER-mitochondria encounter structure (ERMES) or MDM complex, composed of MMM1, MDM10, MDM12 and MDM34. An MMM1 homodimer associates with one molecule of MDM12 on each side in a pairwise head-to-tail manner, and the SMP-LTD domains of MMM1 and MDM12 generate a continuous hydrophobic tunnel for phospholipid trafficking.

Its subcellular location is the mitochondrion outer membrane. It is found in the endoplasmic reticulum membrane. Functionally, component of the ERMES/MDM complex, which serves as a molecular tether to connect the endoplasmic reticulum (ER) and mitochondria. Components of this complex are involved in the control of mitochondrial shape and protein biogenesis, and function in nonvesicular lipid trafficking between the ER and mitochondria. MDM12 is required for the interaction of the ER-resident membrane protein MMM1 and the outer mitochondrial membrane-resident beta-barrel protein MDM10. The MDM12-MMM1 subcomplex functions in the major beta-barrel assembly pathway that is responsible for biogenesis of all mitochondrial outer membrane beta-barrel proteins, and acts in a late step after the SAM complex. The MDM10-MDM12-MMM1 subcomplex further acts in the TOM40-specific pathway after the action of the MDM12-MMM1 complex. Essential for establishing and maintaining the structure of mitochondria and maintenance of mtDNA nucleoids. The sequence is that of Mitochondrial distribution and morphology protein 12 from Ajellomyces dermatitidis (strain ER-3 / ATCC MYA-2586) (Blastomyces dermatitidis).